Reading from the N-terminus, the 112-residue chain is uncharacterized protein (112 aa).

The next 2 helical transmembrane spans lie at proline 7–tyrosine 26 and threonine 36–tyrosine 58.

It is found in the membrane. This is an uncharacterized protein from Saccharomyces cerevisiae (strain ATCC 204508 / S288c) (Baker's yeast).